Consider the following 145-residue polypeptide: Protein BUD31 homolog 1 (145 aa).

The protein belongs to the BUD31 (G10) family.

It localises to the nucleus. This is Protein BUD31 homolog 1 from Oryza sativa subsp. japonica (Rice).